Consider the following 1429-residue polypeptide: Nitric oxide synthase 1 (1429 aa).

Positions 1 to 200 (MEEHTFGVQQ…LQDSGEQDEL (200 aa)) are interaction with NOSIP. Positions 17–99 (SVRLFKRKVG…ETHVVLILRG (83 aa)) constitute a PDZ domain. Disordered regions lie at residues 114–174 (DGTP…SVSQ) and 271–298 (NNPYSENEQSPASGKQSPTKNGSPSRCP). The segment at 163 to 240 (QGRGQGAGSV…TGIQVDRDLD (78 aa)) is interaction with DYNLL1/PIN. Residues 272–294 (NPYSENEQSPASGKQSPTKNGSP) show a composition bias toward polar residues. Ser-280 carries the post-translational modification Phosphoserine. Ser-334 provides a ligand contact to (6R)-L-erythro-5,6,7,8-tetrahydrobiopterin. Residue Cys-415 participates in heme b binding. L-arginine-binding residues include Gln-478, Trp-587, Tyr-588, and Glu-592. Residues Val-677, Trp-678, and Phe-691 each coordinate (6R)-L-erythro-5,6,7,8-tetrahydrobiopterin. Residue Tyr-706 coordinates heme b. Residues 725–745 (KRRAIGFKKLAEAVKFSAKLM) are calmodulin-binding. The Flavodoxin-like domain occupies 755-935 (ATILYATETG…AFRTWAKKVF (181 aa)). Residues Thr-761, Glu-762, Thr-763, Lys-765, Ser-766, Ser-807, Thr-808, and Gly-812 each contribute to the FMN site. Phosphoserine is present on residues Ser-847, Ser-857, and Ser-858. Residues Ser-886, His-891, Cys-893, Glu-919, and Gln-923 each coordinate FMN. The 248-residue stretch at 990-1237 (KRVSAARLLS…VRGAPSFHLP (248 aa)) folds into the FAD-binding FR-type domain. Arg-1010 lines the NADP(+) pocket. FAD-binding residues include His-1032, Arg-1173, Tyr-1174, Tyr-1175, Ser-1176, Thr-1191, and Ala-1193. Ser-1196 lines the NADP(+) pocket. Residues Tyr-1197, Val-1210, Cys-1211, and Ser-1212 each contribute to the FAD site. The NADP(+) site is built by Thr-1251, Arg-1284, Ser-1313, Arg-1314, Lys-1320, Tyr-1322, Gln-1324, Asp-1357, Thr-1398, and Arg-1400.

The protein belongs to the NOS family. Homodimer. Interacts with DLG4; the interaction possibly being prevented by the association between NOS1 and CAPON. Forms a ternary complex with CAPON and RASD1. Forms a ternary complex with CAPON and SYN1. Interacts with ZDHHC23. Interacts with NOSIP; which may impair its synaptic location. Interacts with HTR4. Interacts with VAC14. Interacts (via N-terminal domain) with DLG4 (via N-terminal tandem pair of PDZ domains). Interacts with SLC6A4. Forms a complex with ASL, ASS1 and SLC7A1; the complex regulates cell-autonomous L-arginine synthesis and citrulline recycling while channeling extracellular L-arginine to nitric oxide synthesis pathway. Interacts with DMD; localizes NOS1 to sarcolemma in muscle cells. Interacts with DYNLL1; inhibits the nitric oxide synthase activity. The cofactor is heme b. It depends on FAD as a cofactor. FMN serves as cofactor. Requires (6R)-L-erythro-5,6,7,8-tetrahydrobiopterin as cofactor. Ubiquitinated; mediated by STUB1/CHIP in the presence of Hsp70 and Hsp40 (in vitro). In terms of tissue distribution, widely expressed in the nervous system: expressed in cerebrum, olfactory bulb, hippocampus, midbrain, cerebellum, pons, medulla oblongata, and spinal cord. Also found in skeletal muscle, where it is localized beneath the sarcolemma of fast twitch muscle fibers, and in spleen, heart, kidney, and liver. N-NOS-1 and N-NOS-2 are found in all parts of the nervous system. NNOS beta and gamma occur in a region-specific manner in the brain and NNOS beta expression is developmentally regulated. NNOS Mu is only found in mature skeletal and cardiac muscles.

The protein resides in the cell membrane. It is found in the sarcolemma. The protein localises to the cell projection. It localises to the dendritic spine. It catalyses the reaction 2 L-arginine + 3 NADPH + 4 O2 + H(+) = 2 L-citrulline + 2 nitric oxide + 3 NADP(+) + 4 H2O. Stimulated by calcium/calmodulin. Inhibited by DYNLL1 that prevents the dimerization of the protein. Inhibited by NOSIP. In terms of biological role, produces nitric oxide (NO) which is a messenger molecule with diverse functions throughout the body. In the brain and peripheral nervous system, NO displays many properties of a neurotransmitter. Probably has nitrosylase activity and mediates cysteine S-nitrosylation of cytoplasmic target proteins such SRR. Isoform NNOS Mu may be an effector enzyme for the dystrophin complex. This Mus musculus (Mouse) protein is Nitric oxide synthase 1.